We begin with the raw amino-acid sequence, 253 residues long: Ribosome maturation factor RimP (253 aa).

A compositionally biased stretch (basic and acidic residues) spans 186–199 (RRGKAAEREKKRDL). Residues 186 to 253 (RRGKAAEREK…RARRGEIDPD (68 aa)) are disordered. Over residues 201 to 216 (LAPPLAPHAKPAAQAK) the composition is skewed to low complexity. Positions 240–253 (LAADRARRGEIDPD) are enriched in basic and acidic residues.

This sequence belongs to the RimP family.

The protein resides in the cytoplasm. Its function is as follows. Required for maturation of 30S ribosomal subunits. This is Ribosome maturation factor RimP from Bradyrhizobium sp. (strain BTAi1 / ATCC BAA-1182).